Here is a 200-residue protein sequence, read N- to C-terminus: Alpha/beta-tubulin-N-acetyltransferase 9 (200 aa).

Residues E34–T181 enclose the N-acetyltransferase domain.

The protein belongs to the acetyltransferase family. GNAT subfamily. Interacts with microtubules as well as alpha/beta-tubulin heterodimers.

The protein resides in the nucleus. The protein localises to the cytoplasm. Its subcellular location is the cytoskeleton. It is found in the spindle. It localises to the spindle pole. It carries out the reaction N-terminal L-methionyl-[tubulin] + acetyl-CoA = N-terminal N(alpha)-acetyl-L-methionyl-[tubulin] + CoA + H(+). In terms of biological role, N-acetyltransferase that mediates the acetylation of the N-terminal residues of alpha- and beta-tubulin. Required for microtubule stability and inhibition of JNK signaling to promote cell survival during development, possibly acting independently of its N-acetyltransferase activity. Necessary for the stabilization of spindle microtubules and for mitosis progression. Regulates microtubule stability by inhibiting Spastin-mediated depolymerization and promoting Eb1-mediated polymerization. This is Alpha/beta-tubulin-N-acetyltransferase 9 from Drosophila melanogaster (Fruit fly).